The following is a 235-amino-acid chain: Putative N-acetylmannosamine-6-phosphate 2-epimerase (235 aa).

This sequence belongs to the NanE family.

The enzyme catalyses an N-acyl-D-glucosamine 6-phosphate = an N-acyl-D-mannosamine 6-phosphate. The protein operates within amino-sugar metabolism; N-acetylneuraminate degradation; D-fructose 6-phosphate from N-acetylneuraminate: step 3/5. Converts N-acetylmannosamine-6-phosphate (ManNAc-6-P) to N-acetylglucosamine-6-phosphate (GlcNAc-6-P). The polypeptide is Putative N-acetylmannosamine-6-phosphate 2-epimerase (Aliivibrio fischeri (strain ATCC 700601 / ES114) (Vibrio fischeri)).